We begin with the raw amino-acid sequence, 85 residues long: Homeobox protein knotted-1-like 4 (85 aa).

One can recognise an ELK domain in the interval 1 to 21 (ELKYQLLKKYSGYLSSLRQEF). The homeobox; TALE-type DNA-binding region spans 22 to 85 (SKKKKKGKLP…NQRKRHWKPS (64 aa)).

The protein belongs to the TALE/KNOX homeobox family. As to expression, strongly expressed in ear inflorescence primordia and shoot meristem. Weakly expressed in embryos. Absent from leaves.

Its subcellular location is the nucleus. Probably binds to the DNA sequence 5'-TGAC-3'. The polypeptide is Homeobox protein knotted-1-like 4 (KNOX4) (Zea mays (Maize)).